Consider the following 448-residue polypeptide: MTGRVYVKTHGCQMNEYDSDKMADVLVKERGYTRVDSPGDADVILLNTCSVREKAQEKVFSELGRWKDYKTRNGAVIGVGGCVASQEGEAIVQRAPHVDVVFGPQTLHRLPEMIDRARDGGRSVVDVSFPEIEKFDRLPEPRAEGPTAFVSIMEGCSKYCSFCVVPYTRGEEISRPFEDVIAEVASLAEQGVREVTLLGQNVNAYRGPMADGTVCDLALLIHYVAALDGIGRIRFTTSHPVEFSDSLIEAYREEPKLAGHLHLPVQSGSDLVLKLMKRGHTAAEYLDKIERIKAARPGISIASDFIVGYPGESEADFEDTLRLIEAVGFDQSFSFLYSPRPGTPAASLSDSTPAEVKRERLYRLQETINANARRISESMVGTVQRVLVDGRSRKDPNEISGRTENNRVVNFAGHPRLIGHFVEVRITEAKPNSLRGELLGLDDDMAAA.

The MTTase N-terminal domain occupies 3 to 119 (GRVYVKTHGC…LPEMIDRARD (117 aa)). [4Fe-4S] cluster-binding residues include Cys12, Cys49, Cys82, Cys156, Cys160, and Cys163. Residues 142–374 (RAEGPTAFVS…QETINANARR (233 aa)) enclose the Radical SAM core domain. Positions 377 to 440 (ESMVGTVQRV…PNSLRGELLG (64 aa)) constitute a TRAM domain.

This sequence belongs to the methylthiotransferase family. MiaB subfamily. In terms of assembly, monomer. It depends on [4Fe-4S] cluster as a cofactor.

The protein resides in the cytoplasm. It catalyses the reaction N(6)-dimethylallyladenosine(37) in tRNA + (sulfur carrier)-SH + AH2 + 2 S-adenosyl-L-methionine = 2-methylsulfanyl-N(6)-dimethylallyladenosine(37) in tRNA + (sulfur carrier)-H + 5'-deoxyadenosine + L-methionine + A + S-adenosyl-L-homocysteine + 2 H(+). Catalyzes the methylthiolation of N6-(dimethylallyl)adenosine (i(6)A), leading to the formation of 2-methylthio-N6-(dimethylallyl)adenosine (ms(2)i(6)A) at position 37 in tRNAs that read codons beginning with uridine. This Alkalilimnicola ehrlichii (strain ATCC BAA-1101 / DSM 17681 / MLHE-1) protein is tRNA-2-methylthio-N(6)-dimethylallyladenosine synthase.